Consider the following 186-residue polypeptide: Ribosome-recycling factor (186 aa).

Belongs to the RRF family.

Its subcellular location is the cytoplasm. Responsible for the release of ribosomes from messenger RNA at the termination of protein biosynthesis. May increase the efficiency of translation by recycling ribosomes from one round of translation to another. This Rickettsia canadensis (strain McKiel) protein is Ribosome-recycling factor.